The chain runs to 55 residues: MAKPTTIKIRLNSTAGTGHFYVTKKNARTMTDKMVVRKYDPVKREHVEYKEGKIK.

The protein belongs to the bacterial ribosomal protein bL33 family.

In Cereibacter sphaeroides (strain ATCC 17029 / ATH 2.4.9) (Rhodobacter sphaeroides), this protein is Large ribosomal subunit protein bL33.